The chain runs to 380 residues: Cytochrome b (380 aa).

4 helical membrane passes run 34–54 (FGSL…LLAA), 78–99 (WLIR…YLHI), 114–134 (WNTG…GYVL), and 179–199 (FFTL…IHLT). Residues histidine 84 and histidine 98 each coordinate heme b. Heme b is bound by residues histidine 183 and histidine 197. Position 202 (histidine 202) interacts with a ubiquinone. 4 helical membrane-spanning segments follow: residues 227–247 (LKDI…ALFS), 289–309 (LGGV…PLLH), 321–341 (FSQL…WVGS), and 348–368 (FIII…ILFP).

The protein belongs to the cytochrome b family. As to quaternary structure, the cytochrome bc1 complex contains 11 subunits: 3 respiratory subunits (MT-CYB, CYC1 and UQCRFS1), 2 core proteins (UQCRC1 and UQCRC2) and 6 low-molecular weight proteins (UQCRH/QCR6, UQCRB/QCR7, UQCRQ/QCR8, UQCR10/QCR9, UQCR11/QCR10 and a cleavage product of UQCRFS1). This cytochrome bc1 complex then forms a dimer. Heme b serves as cofactor.

It localises to the mitochondrion inner membrane. Functionally, component of the ubiquinol-cytochrome c reductase complex (complex III or cytochrome b-c1 complex) that is part of the mitochondrial respiratory chain. The b-c1 complex mediates electron transfer from ubiquinol to cytochrome c. Contributes to the generation of a proton gradient across the mitochondrial membrane that is then used for ATP synthesis. The sequence is that of Cytochrome b (MT-CYB) from Antigone antigone (Sarus crane).